Reading from the N-terminus, the 305-residue chain is UDP-3-O-acyl-N-acetylglucosamine deacetylase (305 aa).

Residues H79, H238, and D242 each coordinate Zn(2+). Catalysis depends on H265, which acts as the Proton donor.

This sequence belongs to the LpxC family. The cofactor is Zn(2+).

It carries out the reaction a UDP-3-O-[(3R)-3-hydroxyacyl]-N-acetyl-alpha-D-glucosamine + H2O = a UDP-3-O-[(3R)-3-hydroxyacyl]-alpha-D-glucosamine + acetate. It participates in glycolipid biosynthesis; lipid IV(A) biosynthesis; lipid IV(A) from (3R)-3-hydroxytetradecanoyl-[acyl-carrier-protein] and UDP-N-acetyl-alpha-D-glucosamine: step 2/6. Functionally, catalyzes the hydrolysis of UDP-3-O-myristoyl-N-acetylglucosamine to form UDP-3-O-myristoylglucosamine and acetate, the committed step in lipid A biosynthesis. The protein is UDP-3-O-acyl-N-acetylglucosamine deacetylase of Actinobacillus succinogenes (strain ATCC 55618 / DSM 22257 / CCUG 43843 / 130Z).